The chain runs to 156 residues: Small ribosomal subunit protein uS7 (156 aa).

The protein belongs to the universal ribosomal protein uS7 family. In terms of assembly, part of the 30S ribosomal subunit. Contacts proteins S9 and S11.

In terms of biological role, one of the primary rRNA binding proteins, it binds directly to 16S rRNA where it nucleates assembly of the head domain of the 30S subunit. Is located at the subunit interface close to the decoding center, probably blocks exit of the E-site tRNA. The sequence is that of Small ribosomal subunit protein uS7 from Shewanella loihica (strain ATCC BAA-1088 / PV-4).